The sequence spans 377 residues: MSVLFTILLMAVIGGFIGAMTNYIAIRMLFRPYKAVYLFNKRLPFTPGLIPKRRDELAEHIGKVVVSHLLTEDAIRARLLDENLQREVTETITKMFHEKMKLETTPNELLHHLGYENAEVRSISWLERTLEIEISRFLTTKQSTQMSELIPSMLENELTKKLPHVTERITSKMSVFIASEAGKIQIKQMLQKFFEEHGKMGSMARMFINIDSFSEKIQQEGLKLINQEDTKNIINQLLTTEWHNFEAKELQELIPTEKQAHLAGQLTSEIIQAVPHEKLFNQPIQGILRNYESAITEKMIPFAVERMLDFVATHSAEIVERMDLAKLVETQIATFSLPEIEKLVVEISGRELKMITYLGGILGGFIGIIQGILAMWI.

2 helical membrane-spanning segments follow: residues 1-21 and 357-377; these read MSVLFTILLMAVIGGFIGAMT and YLGGILGGFIGIIQGILAMWI.

The protein belongs to the UPF0754 family.

The protein localises to the cell membrane. In Listeria innocua serovar 6a (strain ATCC BAA-680 / CLIP 11262), this protein is UPF0754 membrane protein lin2327.